Reading from the N-terminus, the 1301-residue chain is MGKRTAENSAANGEGEEKHPEIGVDGRPEKEPTFQDYMRVFKYASKWDLLAYTVGVIASIGVGITLPLLNIVFGQFASKFSDYAGTETLPGDEFRSKLSELCLYLLGLFLGRLVLGYITNFAFRMTGVRITSAIRQDYFTALFSQSVHVLDSMPPGYATTIITTTGNTLQLGISEKLGVFVEYNATMIASIIVAFIYSWQLSLVTFTAVVFITFSVSLVLPYITKGQTNQTKSEAMAMSVASEAMSGIRMIVAYGAESRIGSKYGRFVDEAKKHAQFAGPFIALQYGLVFFSSYAAFGLAFWYGTRLLLEDKINQLGAIIVVLFSVMMIVTAMERISTPLLAVSKATVAACEFFTVIDAPRPEPGHLTDPDVSATEDIILEDVTFAYPSRPHVKILDNLNLRIETGKVTAIVGPSGSGKSTIVGLVERWYGLKDQYVISKPVEKPTDKKNNGGKEEDEQELQELSFAGDETGPPVDLHGRISTCGHSLDDINVKWWRSQIGLVQQEPFLFNDTIYSNVLNGLIGTKWENEPDEKKREMVHEACKEAFADEFIEKLPEGYNTAVGEVGIKLSGGQRQRIAIARAIIRRPAILILDEATSAIDVRGERIVQAALDRASKNRTTIVIAHRLSTIKKADRIVVLRQGQVIQSGTHEGLLTDEAGLYYNLVNAQALSLGEQKEGNEVIAKEERPSSVHEKAHTESTIEEKPLEKKPKNKGLLSSFGRFFYETKSNWWMMALTLFFSACAGAAVPFQAWLFAKVIIVFGYLPDESKVRSESSFWSLMWTVLAISAGLAYCATFFLSTRTASTIRAKYQKQYFLYILHQKVAFFDHDDHSQGTMAARSAEDPRQLEELLGSNMASVFIALWTLMGTIAIALAFAWKLALVSLCVVVPILLAAGYWRMRYEIKFEEMNNAVFVDSSKFASEAIGAFRTVASFTLEVAICDQFRTLNSNHVKDAFKKARWVSLLYAFSDSATIGCQAIVLYYGGRLLLSGEYDLESFFVCFMSVLNAGETTGRALSFGPNVAQVRAAANRILGLRDSQVKDGPEATGEQFISHGDGIEIELENIYFKYPTRDVPVFDGLSLTIEKGQFAALVGASGSGKSSIVSLLERFYDPDHGRILCNGQDIATNNVYTYRRHLSLVAQESSLFQGTLRENILLGVEDTVDDAAVHRVCQEASIHEFIMSLPEGYQTQVGSRGVTLSGGQRQRVAIARALMRNPDILLLDEATSSLDSESEKLVQEAFERAGKGRTMVVVAHRLATVQNADVIFVLGEGKLIEKGSHRELLAARGVYWQMCQSQALDK.

The segment at 1–30 (MGKRTAENSAANGEGEEKHPEIGVDGRPEK) is disordered. A compositionally biased stretch (basic and acidic residues) spans 15–30 (GEEKHPEIGVDGRPEK). Transmembrane regions (helical) follow at residues 54-74 (VGVIASIGVGITLPLLNIVFG), 103-123 (LYLLGLFLGRLVLGYITNFAF), 177-197 (LGVFVEYNATMIASIIVAFIY), and 203-223 (LVTFTAVVFITFSVSLVLPYI). One can recognise an ABC transmembrane type-1 1 domain in the interval 54–345 (VGVIASIGVG…ISTPLLAVSK (292 aa)). N-linked (GlcNAc...) asparagine glycosylation occurs at Asn229. 2 helical membrane-spanning segments follow: residues 281–301 (FIALQYGLVFFSSYAAFGLAF) and 313–333 (INQLGAIIVVLFSVMMIVTAM). The region spanning 378-667 (IILEDVTFAY…EAGLYYNLVN (290 aa)) is the ABC transporter 1 domain. 413-420 (GPSGSGKS) contributes to the ATP binding site. Positions 442–454 (VEKPTDKKNNGGK) are enriched in basic and acidic residues. The disordered stretch occupies residues 442–461 (VEKPTDKKNNGGKEEDEQEL). 2 N-linked (GlcNAc...) asparagine glycosylation sites follow: Asn511 and Asn618. The segment at 682 to 708 (VIAKEERPSSVHEKAHTESTIEEKPLE) is disordered. The 290-residue stretch at 735-1024 (ALTLFFSACA…ALSFGPNVAQ (290 aa)) folds into the ABC transmembrane type-1 2 domain. The next 6 membrane-spanning stretches (helical) occupy residues 745–765 (GAAVPFQAWLFAKVIIVFGYL), 779–799 (SLMWTVLAISAGLAYCATFFL), 858–878 (SVFIALWTLMGTIAIALAFAW), 880–900 (LALVSLCVVVPILLAAGYWRM), 961–981 (WVSLLYAFSDSATIGCQAIVL), and 987–1007 (LLLSGEYDLESFFVCFMSVLN). The 237-residue stretch at 1060 to 1296 (IELENIYFKY…RGVYWQMCQS (237 aa)) folds into the ABC transporter 2 domain. Residue 1094–1101 (GASGSGKS) participates in ATP binding.

Belongs to the ABC transporter superfamily. ABCB family. Multidrug resistance exporter (TC 3.A.1.201) subfamily.

It is found in the cell membrane. ABC transporter; part of the gene cluster that mediates the biosynthesis of beauvericin (BEA), a non-ribosomal cyclic hexadepsipeptide that shows antibiotic, antifungal, insecticidal, and cancer cell antiproliferative and antihaptotactic activity. Functions as a regulator of beauvericin production, rather than in BEA transport out of the cell. Beauvericin has low toxicity to the producing fungus and BEA3 does not play a role in detoxification and self-protection of the producing fungus. The polypeptide is ABC transporter BEA3 (Gibberella fujikuroi (strain CBS 195.34 / IMI 58289 / NRRL A-6831) (Bakanae and foot rot disease fungus)).